The primary structure comprises 192 residues: Thymidine kinase (192 aa).

ATP is bound by residues 9 to 16 and 87 to 90; these read ASMNAGKS and DEAQ. Glu88 (proton acceptor) is an active-site residue. Cys145, Cys147, Cys182, and His185 together coordinate Zn(2+).

It belongs to the thymidine kinase family. In terms of assembly, homotetramer.

It is found in the cytoplasm. The enzyme catalyses thymidine + ATP = dTMP + ADP + H(+). This is Thymidine kinase from Novosphingobium aromaticivorans (strain ATCC 700278 / DSM 12444 / CCUG 56034 / CIP 105152 / NBRC 16084 / F199).